The primary structure comprises 98 residues: DNA-binding protein Fis (98 aa).

The H-T-H motif DNA-binding region spans 74 to 93 (QTRAATMMGINRGTLRKKLK).

The protein belongs to the transcriptional regulatory Fis family. Homodimer.

Activates ribosomal RNA transcription. Plays a direct role in upstream activation of rRNA promoters. The polypeptide is DNA-binding protein Fis (Vibrio atlanticus (strain LGP32) (Vibrio splendidus (strain Mel32))).